We begin with the raw amino-acid sequence, 349 residues long: Protein MULTIPLE CHLOROPLAST DIVISION SITE 1 (349 aa).

The N-terminal 52 residues, 1–52 (MASIDSLQFHSLCNLQSSIGRAKLQNPSSLVIFRRRPVNLNWVQFETKGSFV), are a transit peptide targeting the chloroplast. The Chloroplast intermembrane portion of the chain corresponds to 53–116 (CKAIGDSSTP…VVFLMKKCSV (64 aa)). The helical transmembrane segment at 117–139 (NSIWIGVCITATVLVAAIRAYVV) threads the bilayer. Residues 140–349 (RKSRDNQRAG…NSSSEETHKS (210 aa)) lie on the Stromal side of the membrane. A disordered region spans residues 315-349 (QRPYKFSAKLEGENIQKNSQENHTGNSSSEETHKS). Over residues 329–343 (IQKNSQENHTGNSSS) the composition is skewed to polar residues.

As to quaternary structure, interacts with MIND1. Interacts with ARC6 in the chloroplast stroma and binds to FtsZ2-1 in an ARC6-dependent manner.

The protein localises to the plastid. It localises to the chloroplast inner membrane. In terms of biological role, required for chloroplast division. Together with MIND1 and ARC3, regulates FtsZ ring positioning in chloroplasts in an ARC6-dependent manner. Determines the site of chloroplast division in concert with MIND1. Not directly involved in ring formation, but required for MIND1 and MINE1 localization to regulate FtsZ ring formation during plastidial constriction. The protein is Protein MULTIPLE CHLOROPLAST DIVISION SITE 1 of Arabidopsis thaliana (Mouse-ear cress).